A 235-amino-acid polypeptide reads, in one-letter code: Ribonuclease 3 (235 aa).

Residues 7 to 131 (LSALEARIGH…IIGAVFLDGG (125 aa)) form the RNase III domain. Glutamate 45 is a Mg(2+) binding site. Residue aspartate 49 is part of the active site. Positions 117 and 120 each coordinate Mg(2+). The active site involves glutamate 120. Positions 156–225 (DPKTTLQEWA…AAAFLTREKI (70 aa)) constitute a DRBM domain.

It belongs to the ribonuclease III family. Homodimer. It depends on Mg(2+) as a cofactor.

It is found in the cytoplasm. The enzyme catalyses Endonucleolytic cleavage to 5'-phosphomonoester.. In terms of biological role, digests double-stranded RNA. Involved in the processing of primary rRNA transcript to yield the immediate precursors to the large and small rRNAs (23S and 16S). Processes some mRNAs, and tRNAs when they are encoded in the rRNA operon. Processes pre-crRNA and tracrRNA of type II CRISPR loci if present in the organism. The protein is Ribonuclease 3 of Methylocella silvestris (strain DSM 15510 / CIP 108128 / LMG 27833 / NCIMB 13906 / BL2).